The following is a 432-amino-acid chain: 3-phosphoshikimate 1-carboxyvinyltransferase (432 aa).

3-phosphoshikimate contacts are provided by lysine 21, serine 22, and arginine 26. Lysine 21 is a binding site for phosphoenolpyruvate. The phosphoenolpyruvate site is built by glycine 93 and arginine 121. Residues serine 166, glutamine 168, aspartate 318, and lysine 345 each coordinate 3-phosphoshikimate. A phosphoenolpyruvate-binding site is contributed by glutamine 168. Catalysis depends on aspartate 318, which acts as the Proton acceptor. Residues arginine 349 and arginine 391 each contribute to the phosphoenolpyruvate site.

The protein belongs to the EPSP synthase family. In terms of assembly, monomer.

Its subcellular location is the cytoplasm. It carries out the reaction 3-phosphoshikimate + phosphoenolpyruvate = 5-O-(1-carboxyvinyl)-3-phosphoshikimate + phosphate. It functions in the pathway metabolic intermediate biosynthesis; chorismate biosynthesis; chorismate from D-erythrose 4-phosphate and phosphoenolpyruvate: step 6/7. Functionally, catalyzes the transfer of the enolpyruvyl moiety of phosphoenolpyruvate (PEP) to the 5-hydroxyl of shikimate-3-phosphate (S3P) to produce enolpyruvyl shikimate-3-phosphate and inorganic phosphate. The polypeptide is 3-phosphoshikimate 1-carboxyvinyltransferase (Persephonella marina (strain DSM 14350 / EX-H1)).